The following is a 123-amino-acid chain: Large ribosomal subunit protein uL14 (123 aa).

The protein belongs to the universal ribosomal protein uL14 family. In terms of assembly, part of the 50S ribosomal subunit. Forms a cluster with proteins L3 and L19. In the 70S ribosome, L14 and L19 interact and together make contacts with the 16S rRNA in bridges B5 and B8.

Its function is as follows. Binds to 23S rRNA. Forms part of two intersubunit bridges in the 70S ribosome. The chain is Large ribosomal subunit protein uL14 from Yersinia pestis bv. Antiqua (strain Antiqua).